A 118-amino-acid polypeptide reads, in one-letter code: Small ribosomal subunit protein uS19c (118 aa).

Positions 92 to 118 are disordered; the sequence is KKSSKKVTKNKKSIKKNIKTTSKKFKK.

It belongs to the universal ribosomal protein uS19 family.

It is found in the plastid. Protein S19 forms a complex with S13 that binds strongly to the 16S ribosomal RNA. This is Small ribosomal subunit protein uS19c (rps19) from Euglena longa (Euglenophycean alga).